The sequence spans 347 residues: Phosphoribosylformylglycinamidine cyclo-ligase (347 aa).

Belongs to the AIR synthase family.

The protein resides in the cytoplasm. It catalyses the reaction 2-formamido-N(1)-(5-O-phospho-beta-D-ribosyl)acetamidine + ATP = 5-amino-1-(5-phospho-beta-D-ribosyl)imidazole + ADP + phosphate + H(+). The protein operates within purine metabolism; IMP biosynthesis via de novo pathway; 5-amino-1-(5-phospho-D-ribosyl)imidazole from N(2)-formyl-N(1)-(5-phospho-D-ribosyl)glycinamide: step 2/2. This Yersinia enterocolitica serotype O:8 / biotype 1B (strain NCTC 13174 / 8081) protein is Phosphoribosylformylglycinamidine cyclo-ligase.